We begin with the raw amino-acid sequence, 409 residues long: UPF0261 protein Spro_4740 (409 aa).

It belongs to the UPF0261 family.

The protein is UPF0261 protein Spro_4740 of Serratia proteamaculans (strain 568).